Reading from the N-terminus, the 441-residue chain is Tubulin beta chain (441 aa).

GTP is bound by residues Gln11, Glu69, Ser138, Gly142, Thr143, Gly144, Asn204, and Asn226. Residue Glu69 coordinates Mg(2+).

This sequence belongs to the tubulin family. As to quaternary structure, dimer of alpha and beta chains. A typical microtubule is a hollow water-filled tube with an outer diameter of 25 nm and an inner diameter of 15 nM. Alpha-beta heterodimers associate head-to-tail to form protofilaments running lengthwise along the microtubule wall with the beta-tubulin subunit facing the microtubule plus end conferring a structural polarity. Microtubules usually have 13 protofilaments but different protofilament numbers can be found in some organisms and specialized cells. Mg(2+) serves as cofactor.

Its subcellular location is the cytoplasm. The protein resides in the cytoskeleton. Functionally, tubulin is the major constituent of microtubules, a cylinder consisting of laterally associated linear protofilaments composed of alpha- and beta-tubulin heterodimers. Microtubules grow by the addition of GTP-tubulin dimers to the microtubule end, where a stabilizing cap forms. Below the cap, tubulin dimers are in GDP-bound state, owing to GTPase activity of alpha-tubulin. This chain is Tubulin beta chain, found in Babesia bovis.